The chain runs to 597 residues: MLRTHDAGSLRESNAGQRVTLAGWVARRRDHGGVIFIDLRDASGVAQVVFREDAVLEQAHRLRAEFCVEVSGVVEVRPEGNANDEIATGQIEVNAAELKVLNESAPLPFQLDETAGEEARLRYRYLDLRREGPGNAIRLRSKANAAARSVLSGHEFVEVETPTLTRSTPEGARDFLVPARLQPGSFYALPQSPQLFKQLLMVAGMERYYQIARCYRDEDFRADRQPEFTQLDIEMSFVDQDDVIALAEEILVALWDLVGYRVPTPIDRITYAEAMRRYGSDKPDLRFGLELVECTDYFSETSFRVFQAPYVGAVVMPGGADQPRRTLDGWQEFAKQRGHKGLAYVLVGEDGTLGGPVAKNLSDAERDGLAAHVGANPGDCIFFSAGAAKSSRALLGSVRGEVAQRLGLIDPDAWAFTWVVDAPLFEPADDATAAGDVAVGSGAWTAVHHAFTSPKPESENTFDTDPGSALAYAYDIVCNGHEIGGGSIRIHRRDIQERVFQVMGISNEDAQEKFGFLLDAFAFGAPPHGGIAFGWDRVTALLAGTSSIREVIAFPKSGGGVDPLTDAPAPITAAQRKESGIDAKPEKAEKAGKPADA.

An L-aspartate-binding site is contributed by glutamate 170. The tract at residues 194–197 is aspartate; it reads QLFK. Arginine 216 is a binding site for L-aspartate. ATP-binding positions include 216-218 and glutamine 225; that span reads RDE. Histidine 448 is a binding site for L-aspartate. Glutamate 482 lines the ATP pocket. Residue arginine 489 coordinates L-aspartate. ATP is bound at residue 534–537; the sequence is GWDR. Residues 558–597 form a disordered region; that stretch reads GGGVDPLTDAPAPITAAQRKESGIDAKPEKAEKAGKPADA. Over residues 575–597 the composition is skewed to basic and acidic residues; the sequence is QRKESGIDAKPEKAEKAGKPADA.

The protein belongs to the class-II aminoacyl-tRNA synthetase family. Type 1 subfamily. As to quaternary structure, homodimer.

The protein resides in the cytoplasm. It carries out the reaction tRNA(Asx) + L-aspartate + ATP = L-aspartyl-tRNA(Asx) + AMP + diphosphate. Functionally, aspartyl-tRNA synthetase with relaxed tRNA specificity since it is able to aspartylate not only its cognate tRNA(Asp) but also tRNA(Asn). Reaction proceeds in two steps: L-aspartate is first activated by ATP to form Asp-AMP and then transferred to the acceptor end of tRNA(Asp/Asn). The protein is Aspartate--tRNA(Asp/Asn) ligase of Mycobacteroides abscessus (strain ATCC 19977 / DSM 44196 / CCUG 20993 / CIP 104536 / JCM 13569 / NCTC 13031 / TMC 1543 / L948) (Mycobacterium abscessus).